Reading from the N-terminus, the 123-residue chain is Methylmalonyl-CoA carboxyltransferase 1.3S subunit (123 aa).

Residues Gly46–Gly123 form the Biotinyl-binding domain. Lys89 is subject to N6-biotinyllysine.

Transcarboxylase is composed of three subunits: 1.3S, 5S, and 12S. The core of the enzyme is composed of six 12S subunits. On each side of the core there are three pairs of 5S subunits. Each 5S dimer is attached to the core by two 1.3S subunits. Thus the total number of chains is 30 (6 + 12 + 12).

The enzyme catalyses (S)-methylmalonyl-CoA + pyruvate = propanoyl-CoA + oxaloacetate. Functionally, the biotinyl 1.3S subunit serves as a carboxyl carrier between the substrate-binding sites on the 12S and 5S subunits. In Propionibacterium freudenreichii subsp. shermanii, this protein is Methylmalonyl-CoA carboxyltransferase 1.3S subunit.